The following is a 214-amino-acid chain: Adenylate kinase (214 aa).

10–15 (GAGKGT) serves as a coordination point for ATP. Residues 30 to 59 (STGDMLRSAVKAGTELGLKAKALMDHGKLV) are NMP. Residues threonine 31, arginine 36, 57–59 (KLV), 85–88 (GFPR), and glutamine 92 each bind AMP. An LID region spans residues 122–159 (GRRIHAPSGRVYHIKFNPPVVENKDDVTGEELTVRKDD). Residues arginine 123 and 132 to 133 (VY) contribute to the ATP site. AMP-binding residues include arginine 156 and arginine 167. Arginine 200 contacts ATP.

It belongs to the adenylate kinase family. Monomer.

The protein resides in the cytoplasm. It carries out the reaction AMP + ATP = 2 ADP. It functions in the pathway purine metabolism; AMP biosynthesis via salvage pathway; AMP from ADP: step 1/1. Catalyzes the reversible transfer of the terminal phosphate group between ATP and AMP. Plays an important role in cellular energy homeostasis and in adenine nucleotide metabolism. This chain is Adenylate kinase, found in Photorhabdus laumondii subsp. laumondii (strain DSM 15139 / CIP 105565 / TT01) (Photorhabdus luminescens subsp. laumondii).